Here is a 657-residue protein sequence, read N- to C-terminus: Threonine--tRNA ligase (657 aa).

The region spanning 7 to 70 (SQTQVTVTLP…SEDASIEIVT (64 aa)) is the TGS domain. The segment at 253–555 (DHRKLGAELE…LIEHTGGNFP (303 aa)) is catalytic. Zn(2+) contacts are provided by Cys351, His402, and His532.

It belongs to the class-II aminoacyl-tRNA synthetase family. As to quaternary structure, homodimer. The cofactor is Zn(2+).

It is found in the cytoplasm. The enzyme catalyses tRNA(Thr) + L-threonine + ATP = L-threonyl-tRNA(Thr) + AMP + diphosphate + H(+). Its function is as follows. Catalyzes the attachment of threonine to tRNA(Thr) in a two-step reaction: L-threonine is first activated by ATP to form Thr-AMP and then transferred to the acceptor end of tRNA(Thr). Also edits incorrectly charged L-seryl-tRNA(Thr). In Prosthecochloris aestuarii (strain DSM 271 / SK 413), this protein is Threonine--tRNA ligase.